Consider the following 25-residue polypeptide: Ocellatin-F1 (25 aa).

Leu25 bears the Leucine amide mark.

The protein belongs to the frog skin active peptide (FSAP) family. Ocellatin subfamily. In terms of tissue distribution, expressed by the skin glands.

The protein resides in the secreted. Antibacterial peptide that inhibits reference strains of both Gram-negative bacteria (E.coli, P.aeruginosa, E.cloacae, K.pneumoniae, and A.actinomycetemcomitans) and Gram-positive bacteria (S.aureus) with relatively low potencies (MIC=25-400 uM). Shows antifungal activity against C.lusitaniae (MIC=50.25 uM), but no activity against C.albicans. In the presence of an alkaloid (bufotenine), inhibits cellular infection by the rabies virus. The peptide shows very low hemolytic activity against rabbit erythrocytes. The low amphipathicity of alpha-helices demonstrated by wheel projection as well as the low cationicity may explain the low antibacterial and hemolytic potencies. The sequence is that of Ocellatin-F1 from Leptodactylus labyrinthicus (Labyrinth frog).